A 432-amino-acid chain; its full sequence is N-acylneuraminate cytidylyltransferase (432 aa).

Position 1 is an N-acetylmethionine (M1). A disordered region spans residues M1–E38. The BC1 motif motif lies at P15–R31. The segment covering R18–R29 has biased composition (basic residues). 2 positions are modified to omega-N-methylarginine: R35 and R50. Substrate is bound by residues R50, N60, R109, S118, S120, and Q141. The short motif at K198 to D204 is the BC2 motif element. Residue R199 is part of the active site. The BC3 motif motif lies at K267 to K274.

The protein belongs to the CMP-NeuNAc synthase family. As to quaternary structure, homotetramer; the active enzyme is formed by a dimer of dimers. In terms of tissue distribution, highly expressed in brain and heart, and at intermediate level muscle and liver.

Its subcellular location is the nucleus. It carries out the reaction an N-acylneuraminate + CTP = a CMP-N-acyl-beta-neuraminate + diphosphate. It functions in the pathway amino-sugar metabolism; N-acetylneuraminate metabolism. Functionally, catalyzes the activation of N-acetylneuraminic acid (NeuNAc) to cytidine 5'-monophosphate N-acetylneuraminic acid (CMP-NeuNAc), a substrate required for the addition of sialic acid. Has some activity toward NeuNAc, N-glycolylneuraminic acid (Neu5Gc) or 2-keto-3-deoxy-D-glycero-D-galacto-nononic acid (KDN). This chain is N-acylneuraminate cytidylyltransferase (Cmas), found in Mus musculus (Mouse).